A 495-amino-acid chain; its full sequence is Protein adenylyltransferase Fic (495 aa).

The interval 1–23 (MGTEAEPPSPPSPPAQQQEQANP) is disordered. The chain crosses the membrane as a helical span at residues 36–58 (LYRLVLFFIAGSLTAWMFHAFSS). 2 TPR repeats span residues 121–154 (ALVSLRMAQDMYLTGKDDKAARLFEHALALAPRH) and 155–189 (PEVLLRYGEFLEHNQRNIVLADQYYFQALTISPSN). The short motif at 246 to 251 (SVGIEG) is the Inhibitory (S/T)XXXE(G/N) motif element. Residues glutamate 250 and 331-334 (VGGH) contribute to the ATP site. Residues 300–435 (ITIKDILELH…IRPFVRFIAD (136 aa)) form the Fido domain. The active site involves histidine 378. ATP is bound by residues 382-389 (DGNGRTSR), 414-415 (YY), and asparagine 422.

The protein belongs to the fic family. Homodimer.

It is found in the membrane. It carries out the reaction L-tyrosyl-[protein] + ATP = O-(5'-adenylyl)-L-tyrosyl-[protein] + diphosphate. It catalyses the reaction L-threonyl-[protein] + ATP = 3-O-(5'-adenylyl)-L-threonyl-[protein] + diphosphate. The catalysed reaction is 3-O-(5'-adenylyl)-L-threonyl-[protein] + H2O = L-threonyl-[protein] + AMP + H(+). With respect to regulation, the side chain of Glu-250 determines which of the two opposing activities (AMPylase or de-AMPylase) will take place. In response to endoplasmic reticulum stress, mediates de-AMPylase activity. Adenylyltransferase activity is inhibited by the inhibitory helix present at the N-terminus: Glu-250 binds ATP and competes with ATP-binding at Arg-389, thereby preventing adenylyltransferase activity. In unstressed cells, disengagement of Glu-250 promotes adenylyltransferase activity. Activation dissociates ATP-binding from Glu-250, allowing ordered binding of the entire ATP moiety with the alpha-phosphate in an orientation that is productive for accepting an incoming target hydroxyl side chain. In terms of biological role, protein that can both mediate the addition of adenosine 5'-monophosphate (AMP) to specific residues of target proteins (AMPylation), and the removal of the same modification from target proteins (de-AMPylation), depending on the context. The side chain of Glu-250 determines which of the two opposing activities (AMPylase or de-AMPylase) will take place. Acts as a key regulator of the unfolded protein response (UPR) by mediating AMPylation or de-AMPylation of Hsc70-3/BiP. In unstressed cells, acts as an adenylyltransferase by mediating AMPylation of Hsc70-3/BiP at 'Thr-518', thereby inactivating it. In response to endoplasmic reticulum stress, acts as a phosphodiesterase by mediating removal of ATP (de-AMPylation) from Hsc70-3/BiP at 'Thr-518', leading to restore HSPA5/BiP activity. This is Protein adenylyltransferase Fic from Drosophila erecta (Fruit fly).